A 111-amino-acid polypeptide reads, in one-letter code: Probable 4-amino-4-deoxy-L-arabinose-phosphoundecaprenol flippase subunit ArnE (111 aa).

3 consecutive transmembrane segments (helical) span residues 38 to 58 (LWLG…LLVL), 61 to 81 (LPVG…TLAA), and 91 to 111 (PRHW…GSAA). The 70-residue stretch at 40-109 (LGLALICMGA…IISGIIILGS (70 aa)) folds into the EamA domain.

It belongs to the ArnE family. Heterodimer of ArnE and ArnF.

Its subcellular location is the cell inner membrane. It participates in bacterial outer membrane biogenesis; lipopolysaccharide biosynthesis. In terms of biological role, translocates 4-amino-4-deoxy-L-arabinose-phosphoundecaprenol (alpha-L-Ara4N-phosphoundecaprenol) from the cytoplasmic to the periplasmic side of the inner membrane. This chain is Probable 4-amino-4-deoxy-L-arabinose-phosphoundecaprenol flippase subunit ArnE, found in Salmonella paratyphi B (strain ATCC BAA-1250 / SPB7).